The primary structure comprises 245 residues: Suppressor of aph-1 (245 aa).

One can recognise a GYF domain in the interval 12-60 (DTKWHYLGPDSEKYGPYMSKDMLFWLQAGYFNDGLQLKTENEPNYHTLG). A disordered region spans residues 126-166 (NQNGPPMGAQMHSQPPSEPIDAGSLSHTPDSENETRLNEQT).

Its function is as follows. Involved in negative regulation of early and late embryonic Notch signaling. The protein is Suppressor of aph-1 of Caenorhabditis elegans.